Here is an 88-residue protein sequence, read N- to C-terminus: Sec-independent protein translocase protein TatA (88 aa).

Residues 1–21 (MGSLSPWHWVVLVVVVVLLFG) traverse the membrane as a helical segment. Residues 49 to 71 (ENQAQASALETPMQNPTVVQSQR) are compositionally biased toward polar residues. A disordered region spans residues 49–88 (ENQAQASALETPMQNPTVVQSQRVVPPWSTEQDHTEARPA). Over residues 79–88 (EQDHTEARPA) the composition is skewed to basic and acidic residues.

The protein belongs to the TatA/E family. The Tat system comprises two distinct complexes: a TatABC complex, containing multiple copies of TatA, TatB and TatC subunits, and a separate TatA complex, containing only TatA subunits. Substrates initially bind to the TatABC complex, which probably triggers association of the separate TatA complex to form the active translocon.

The protein localises to the cell membrane. Its function is as follows. Part of the twin-arginine translocation (Tat) system that transports large folded proteins containing a characteristic twin-arginine motif in their signal peptide across membranes. TatA could form the protein-conducting channel of the Tat system. The protein is Sec-independent protein translocase protein TatA of Mycobacterium leprae (strain TN).